Reading from the N-terminus, the 233-residue chain is RNA/RNP complex-1-interacting phosphatase homolog (233 aa).

Over residues 1–14 (MSNYHHNHNYQHRP) the composition is skewed to basic residues. Residues 1–21 (MSNYHHNHNYQHRPRGYERLP) form a disordered region. One can recognise a Tyrosine-protein phosphatase domain in the interval 34 to 206 (NVGRDIDGTR…LYEAERKKKY (173 aa)). Cys150 functions as the Phosphocysteine intermediate in the catalytic mechanism. 151–156 (THGLNR) lines the substrate pocket. The Proton donor/acceptor role is filled by Arg156. The disordered stretch occupies residues 204-233 (KKYGKSSGKSSGNSADSTISSEQLHRNNSQ). Residues 208–217 (KSSGKSSGNS) are compositionally biased toward low complexity. Residues 218–233 (ADSTISSEQLHRNNSQ) are compositionally biased toward polar residues.

This sequence belongs to the protein-tyrosine phosphatase family. Non-receptor class dual specificity subfamily. Interacts with the ERI/DICER complex component dcr-1. Interacts with ERI/DICER complex components rrf-3 and isoform b of eri-1. Interacts with drh-3 and rde-8.

The protein resides in the cytoplasm. It is found in the nucleus. In terms of biological role, RNA polyphosphatase which has RNA 5'-triphosphatase and diphosphatase activities. Displays poor protein-tyrosine phosphatase activity. Binds to 5'-triphosphorylated RNAs (also called ppp-RNAs). Dephosphorylates ppp-RNAs converting them to 5'-monophosphorylated RNAs (also called p-RNAs). During small-RNA-mediated gene-silencing or RNA interference (RNAi), involved in the dcr-1-mediated processing of an amplified dsRNA intermediate. This is most likely in association with several components of the ERI/DICER complex including dcr-1, eri-1 and rrf-3. Plays a role in the biogenesis of 26G small interfering RNAs (26G-siRNAs), which are a class of 26 nucleotide siRNAs that possess a guanine residue at the 5'-end, by dephosphorylating 5'-triphosphorylated 26G-siRNAs prior to their maturation by the ERI/DICER complex. Plays a role in the biogenesis of csr-1-bound 22G small interfering RNAs (22G-siRNAs), which are a class of 22 nucleotide siRNAs that possess a guanine residue at the 5'-end. Not required for the biogenesis of microRNAs (miRNA) or for the biogenesis of a class of 21 nucleotide PIWI-interacting RNAs (piRNAs) that possess a uracil residue at the 5'-end (also called 21U-RNAs). The polypeptide is RNA/RNP complex-1-interacting phosphatase homolog (Caenorhabditis elegans).